The sequence spans 178 residues: NADH-quinone oxidoreductase subunit I 2 (178 aa).

4Fe-4S ferredoxin-type domains follow at residues isoleucine 46–alanine 78 and alanine 88–phenylalanine 117. 8 residues coordinate [4Fe-4S] cluster: cysteine 58, cysteine 61, cysteine 64, cysteine 68, cysteine 97, cysteine 100, cysteine 103, and cysteine 107.

The protein belongs to the complex I 23 kDa subunit family. NDH-1 is composed of 14 different subunits. Subunits NuoA, H, J, K, L, M, N constitute the membrane sector of the complex. [4Fe-4S] cluster serves as cofactor.

It localises to the cell inner membrane. It catalyses the reaction a quinone + NADH + 5 H(+)(in) = a quinol + NAD(+) + 4 H(+)(out). Functionally, NDH-1 shuttles electrons from NADH, via FMN and iron-sulfur (Fe-S) centers, to quinones in the respiratory chain. The immediate electron acceptor for the enzyme in this species is believed to be ubiquinone. Couples the redox reaction to proton translocation (for every two electrons transferred, four hydrogen ions are translocated across the cytoplasmic membrane), and thus conserves the redox energy in a proton gradient. This is NADH-quinone oxidoreductase subunit I 2 from Syntrophobacter fumaroxidans (strain DSM 10017 / MPOB).